The sequence spans 131 residues: Fumarate reductase subunit C (131 aa).

Transmembrane regions (helical) follow at residues 30–50, 57–77, and 109–129; these read EGTA…LFAL, WMGF…LITL, and IIKG…YVAL.

This sequence belongs to the FrdC family. As to quaternary structure, part of an enzyme complex containing four subunits: a flavoprotein (FrdA), an iron-sulfur protein (FrdB), and two hydrophobic anchor proteins (FrdC and FrdD).

The protein localises to the cell inner membrane. In terms of biological role, two distinct, membrane-bound, FAD-containing enzymes are responsible for the catalysis of fumarate and succinate interconversion; fumarate reductase is used in anaerobic growth, and succinate dehydrogenase is used in aerobic growth. Anchors the catalytic components of the fumarate reductase complex to the cell inner membrane, binds quinones. This is Fumarate reductase subunit C from Salmonella dublin (strain CT_02021853).